Reading from the N-terminus, the 441-residue chain is Chitinase-like protein Idgf3 (441 aa).

The signal sequence occupies residues 1–23 (MTGSLWLSLALSLAVLAQFKVSA). The GH18 domain maps to 25–441 (PNLVCFYDSQ…MLRAIKYRLL (417 aa)). Cys-29 and Cys-56 are oxidised to a cystine. N-linked (GlcNAc...) asparagine glycosylation occurs at Asn-221. The disordered stretch occupies residues 309-331 (SGDSGMPVVPSTQGPAPAGPQSK). Cys-342 and Cys-425 are joined by a disulfide.

This sequence belongs to the glycosyl hydrolase 18 family. IDGF subfamily. In terms of processing, glycosylated.

The protein resides in the secreted. In terms of biological role, cooperates with insulin-like peptides to stimulate the proliferation, polarization and motility of imaginal disk cells. May act by stabilizing the binding of insulin-like peptides to its receptor through a simultaneous interaction with both molecules to form a multiprotein signaling complex. The sequence is that of Chitinase-like protein Idgf3 (Idgf3) from Drosophila yakuba (Fruit fly).